A 479-amino-acid polypeptide reads, in one-letter code: Acyltransferase easC (479 aa).

His-161 acts as the Proton acceptor in catalysis.

It belongs to the plant acyltransferase family. Monomer.

It functions in the pathway antibiotic biosynthesis. Functionally, acyltransferase; part of the gene cluster that mediates the biosynthesis of emericellamides, secondary metabolites acting as antibiotics. The biosynthesis of emericellamides initiates from the highly reducing polyketide synthase easB which catalyzes the formation of the linear polyketide chain. EasB produces several polyketides that can be further processed by the downstream enzymes. The polyketides are released from easB as linear polyketide carboxylic acids, which are converted to CoA thioesters by the acyl-CoA ligase easD. The substrates are then loaded onto the acyltransferase easC, which shuttles them to the first thiolation (T) domain of the nonribosomal peptide synthetase easA. EasA then performs condensation of the polyketides with one glycine, two alanine, one valine and one leucine residues. A last step of cyclization leads to the production of emericellamides. The chain is Acyltransferase easC from Emericella nidulans (strain FGSC A4 / ATCC 38163 / CBS 112.46 / NRRL 194 / M139) (Aspergillus nidulans).